Reading from the N-terminus, the 150-residue chain is uncharacterized protein (150 aa).

The segment covering 81–90 (TTKPSCSFAQ) has biased composition (polar residues). Positions 81–125 (TTKPSCSFAQPVTPRTREGAGVRGHRRRRRGSLSLIPWKTSNDKQ) are disordered.

This is an uncharacterized protein from Homo sapiens (Human).